The chain runs to 458 residues: Tissue-resident T-cell transcription regulator protein ZNF683 (458 aa).

Disordered stretches follow at residues 84–109 and 249–275; these read PQDL…TDSE and TLHS…APTR. C2H2-type zinc fingers lie at residues 301-323, 329-351, and 357-379; these read YECN…LRVH, FQCA…HLVH, and HQCQ…LRLH.

This sequence belongs to the krueppel C2H2-type zinc-finger protein family. Expressed in tissue-resident memory T (Trm) cell population in non-lymphoid organs, such as skin and gut. Expressed in innate lymphocytes, including tissue-resident natural killer (trNK) and natural killer T (NKT) cells in thymus, spleen and liver.

It is found in the nucleus. In terms of biological role, transcription factor that mediates a transcriptional program in various innate and adaptive immune tissue-resident lymphocyte T-cell types such as tissue-resident memory T (Trm), natural killer (trNK) and natural killer T (NKT) cells and negatively regulates gene expression of proteins that promote the egress of tissue-resident T-cell populations from non-lymphoid organs. Plays a role in the development, retention and long-term establishment of adaptive and innate tissue-resident lymphocyte T-cell types in non-lymphoid organs, such as the skin and gut, but also in other nonbarrier tissues like liver and kidney, and therefore may provide immediate immunological protection against reactivating infections or viral reinfection. Also plays a role in the differentiation of both thymic and peripheral NKT cells. Negatively regulates the accumulation of interferon-gamma (IFN-gamma) in NKT cells at steady state or after antigenic stimulation. Positively regulates granzyme B production in NKT cells after innate stimulation. Associates with the transcriptional repressor PRDM1/BLIMP1 to chromatin at gene promoter regions. This chain is Tissue-resident T-cell transcription regulator protein ZNF683, found in Mus musculus (Mouse).